Reading from the N-terminus, the 235-residue chain is Segregation and condensation protein A (235 aa).

Belongs to the ScpA family. In terms of assembly, component of a cohesin-like complex composed of ScpA, ScpB and the Smc homodimer, in which ScpA and ScpB bind to the head domain of Smc. The presence of the three proteins is required for the association of the complex with DNA.

It is found in the cytoplasm. In terms of biological role, participates in chromosomal partition during cell division. May act via the formation of a condensin-like complex containing Smc and ScpB that pull DNA away from mid-cell into both cell halves. This Streptococcus mutans serotype c (strain ATCC 700610 / UA159) protein is Segregation and condensation protein A.